The sequence spans 83 residues: Late seed maturation protein P8B6 (83 aa).

2 stretches are compositionally biased toward basic and acidic residues: residues 1–18 (MASQQEKKQLDERAKKGE) and 37–51 (AEGRSRGGNTRKEQL). The segment at 1 to 83 (MASQQEKKQL…DAEDEPSTRT (83 aa)) is disordered. The segment covering 73–83 (EDAEDEPSTRT) has biased composition (acidic residues).

Belongs to the small hydrophilic plant seed protein family.

The protein resides in the cytoplasm. Its function is as follows. This protein may play a role in equipping the seed for survival, maintaining a minimal level of hydration in the dry organism and preventing the denaturation of cytoplasmic components, or may play a role during imbibition by controlling water uptake. The chain is Late seed maturation protein P8B6 from Raphanus sativus (Radish).